The following is a 505-amino-acid chain: Probable Xaa-Pro aminopeptidase Pc16g13390 (505 aa).

Aspartate 287, aspartate 298, glutamate 436, and glutamate 475 together coordinate Mn(2+).

Belongs to the peptidase M24B family. The cofactor is Mn(2+).

It catalyses the reaction Release of any N-terminal amino acid, including proline, that is linked to proline, even from a dipeptide or tripeptide.. Its function is as follows. Catalyzes the removal of a penultimate prolyl residue from the N-termini of peptides. This Penicillium rubens (strain ATCC 28089 / DSM 1075 / NRRL 1951 / Wisconsin 54-1255) (Penicillium chrysogenum) protein is Probable Xaa-Pro aminopeptidase Pc16g13390.